The primary structure comprises 573 residues: Methionine--tRNA ligase (573 aa).

The short motif at 11–21 (PYINGIKHLGN) is the 'HIGH' region element. Positions 143, 146, 156, and 159 each coordinate Zn(2+). The 'KMSKS' region motif lies at 346–350 (QFSTS). Thr349 serves as a coordination point for ATP.

It belongs to the class-I aminoacyl-tRNA synthetase family. MetG type 1 subfamily. As to quaternary structure, monomer. The cofactor is Zn(2+).

The protein localises to the cytoplasm. It catalyses the reaction tRNA(Met) + L-methionine + ATP = L-methionyl-tRNA(Met) + AMP + diphosphate. Its function is as follows. Is required not only for elongation of protein synthesis but also for the initiation of all mRNA translation through initiator tRNA(fMet) aminoacylation. This chain is Methionine--tRNA ligase, found in Ruegeria sp. (strain TM1040) (Silicibacter sp.).